Here is a 311-residue protein sequence, read N- to C-terminus: Aspartate carbamoyltransferase catalytic subunit (311 aa).

Carbamoyl phosphate is bound by residues Arg-59 and Thr-60. Lys-87 contributes to the L-aspartate binding site. Residues Arg-109, His-139, and Gln-142 each coordinate carbamoyl phosphate. Residues Arg-172 and Arg-224 each coordinate L-aspartate. Ala-265 and Pro-266 together coordinate carbamoyl phosphate.

The protein belongs to the aspartate/ornithine carbamoyltransferase superfamily. ATCase family. Heterododecamer (2C3:3R2) of six catalytic PyrB chains organized as two trimers (C3), and six regulatory PyrI chains organized as three dimers (R2).

It catalyses the reaction carbamoyl phosphate + L-aspartate = N-carbamoyl-L-aspartate + phosphate + H(+). Its pathway is pyrimidine metabolism; UMP biosynthesis via de novo pathway; (S)-dihydroorotate from bicarbonate: step 2/3. Catalyzes the condensation of carbamoyl phosphate and aspartate to form carbamoyl aspartate and inorganic phosphate, the committed step in the de novo pyrimidine nucleotide biosynthesis pathway. This chain is Aspartate carbamoyltransferase catalytic subunit, found in Streptococcus pyogenes serotype M12 (strain MGAS2096).